We begin with the raw amino-acid sequence, 196 residues long: uncharacterized protein (196 aa).

This is an uncharacterized protein from Acanthamoeba polyphaga mimivirus (APMV).